A 250-amino-acid polypeptide reads, in one-letter code: AA9 family lytic polysaccharide monooxygenase F (250 aa).

Residues 1–18 form the signal peptide; that stretch reads MHLKTFSNLLVFVATVAA. Residue H19 coordinates Cu(2+). N-linked (GlcNAc...) asparagine glycans are attached at residues N24 and N85. 2 cysteine pairs are disulfide-bonded: C70–C199 and C169–C250. H108 provides a ligand contact to Cu(2+). The N-linked (GlcNAc...) asparagine glycan is linked to N146. Residues H185 and Q194 each contribute to the O2 site. Y196 contributes to the Cu(2+) binding site.

Belongs to the polysaccharide monooxygenase AA9 family. Requires Cu(2+) as cofactor.

The protein localises to the secreted. The enzyme catalyses [(1-&gt;4)-beta-D-glucosyl]n+m + reduced acceptor + O2 = 4-dehydro-beta-D-glucosyl-[(1-&gt;4)-beta-D-glucosyl]n-1 + [(1-&gt;4)-beta-D-glucosyl]m + acceptor + H2O.. Lytic polysaccharide monooxygenase (LPMO) that depolymerizes crystalline and amorphous polysaccharides via the oxidation of scissile alpha- or beta-(1-4)-glycosidic bonds, yielding C1 and C4 oxidation products. Catalysis by LPMOs requires the reduction of the active-site copper from Cu(II) to Cu(I) by a reducing agent and H(2)O(2) or O(2) as a cosubstrate. The protein is AA9 family lytic polysaccharide monooxygenase F of Botryotinia fuckeliana (strain B05.10) (Noble rot fungus).